A 103-amino-acid polypeptide reads, in one-letter code: Small ribosomal subunit protein uS10 (103 aa).

It belongs to the universal ribosomal protein uS10 family. Part of the 30S ribosomal subunit.

In terms of biological role, involved in the binding of tRNA to the ribosomes. The polypeptide is Small ribosomal subunit protein uS10 (Verminephrobacter eiseniae (strain EF01-2)).